We begin with the raw amino-acid sequence, 231 residues long: NADH-ubiquinone oxidoreductase chain 4 (231 aa).

Transmembrane regions (helical) follow at residues 1–21, 34–54, 63–85, 89–111, 128–148, 156–176, and 211–231; these read PIAG…YGII, MFLP…LTCL, IAYS…TPWG, AMAL…NTTY, ILPM…AIPP, LLIM…LGLS, and LLMI…ELII.

Belongs to the complex I subunit 4 family.

It localises to the mitochondrion membrane. The catalysed reaction is a ubiquinone + NADH + 5 H(+)(in) = a ubiquinol + NAD(+) + 4 H(+)(out). Its function is as follows. Core subunit of the mitochondrial membrane respiratory chain NADH dehydrogenase (Complex I) that is believed to belong to the minimal assembly required for catalysis. Complex I functions in the transfer of electrons from NADH to the respiratory chain. The immediate electron acceptor for the enzyme is believed to be ubiquinone. The chain is NADH-ubiquinone oxidoreductase chain 4 (MT-ND4) from Agkistrodon piscivorus piscivorus (Eastern cottonmouth).